We begin with the raw amino-acid sequence, 412 residues long: uncharacterized protein (412 aa).

Residues 50–264 form the Radical SAM core domain; that stretch reads EVDIRTAYIN…KSGRRIVIGD (215 aa). [4Fe-4S] cluster-binding residues include C64, C68, and C71.

This sequence belongs to the radical SAM superfamily. Anaerobic sulfatase-maturating enzyme family. It depends on [4Fe-4S] cluster as a cofactor.

This is an uncharacterized protein from Archaeoglobus fulgidus (strain ATCC 49558 / DSM 4304 / JCM 9628 / NBRC 100126 / VC-16).